Consider the following 124-residue polypeptide: Small ribosomal subunit protein uS12 (124 aa).

Positions 1-24 (MPTINQLIKKPRKSQKEKTASPAL) are disordered. The residue at position 89 (D89) is a 3-methylthioaspartic acid.

This sequence belongs to the universal ribosomal protein uS12 family. In terms of assembly, part of the 30S ribosomal subunit. Contacts proteins S8 and S17. May interact with IF1 in the 30S initiation complex.

With S4 and S5 plays an important role in translational accuracy. Its function is as follows. Interacts with and stabilizes bases of the 16S rRNA that are involved in tRNA selection in the A site and with the mRNA backbone. Located at the interface of the 30S and 50S subunits, it traverses the body of the 30S subunit contacting proteins on the other side and probably holding the rRNA structure together. The combined cluster of proteins S8, S12 and S17 appears to hold together the shoulder and platform of the 30S subunit. The protein is Small ribosomal subunit protein uS12 of Borrelia hermsii (strain HS1 / DAH).